The chain runs to 130 residues: Small ribosomal subunit protein uS11c (130 aa).

This sequence belongs to the universal ribosomal protein uS11 family. As to quaternary structure, part of the 30S ribosomal subunit.

It is found in the plastid. The protein localises to the chloroplast. The polypeptide is Small ribosomal subunit protein uS11c (Tupiella akineta (Green alga)).